Reading from the N-terminus, the 162-residue chain is Ubiquitin-fold modifier-conjugating enzyme 1 (162 aa).

C115 (glycyl thioester intermediate) is an active-site residue.

The protein belongs to the ubiquitin-conjugating enzyme family. UFC1 subfamily. Interacts with uba-5. In terms of tissue distribution, expressed in the intestine.

Functionally, E2-like enzyme which forms an intermediate with ufm-1. The intermediate is formed via a thioester linkage. This chain is Ubiquitin-fold modifier-conjugating enzyme 1, found in Caenorhabditis elegans.